The sequence spans 359 residues: 3-dehydroquinate synthase (359 aa).

Residues 71-76 (DGEAYK), 105-109 (GVVGD), 129-130 (TT), K142, and K151 contribute to the NAD(+) site. Zn(2+) contacts are provided by E184, H247, and H264.

It belongs to the sugar phosphate cyclases superfamily. Dehydroquinate synthase family. It depends on Co(2+) as a cofactor. Zn(2+) serves as cofactor. NAD(+) is required as a cofactor.

The protein resides in the cytoplasm. The enzyme catalyses 7-phospho-2-dehydro-3-deoxy-D-arabino-heptonate = 3-dehydroquinate + phosphate. It participates in metabolic intermediate biosynthesis; chorismate biosynthesis; chorismate from D-erythrose 4-phosphate and phosphoenolpyruvate: step 2/7. Its function is as follows. Catalyzes the conversion of 3-deoxy-D-arabino-heptulosonate 7-phosphate (DAHP) to dehydroquinate (DHQ). This chain is 3-dehydroquinate synthase, found in Burkholderia orbicola (strain MC0-3).